The following is a 1703-amino-acid chain: MMSSEEYEADCFGLYSDENNVLLKANEPETTAATKQQHQPQFQQQQQQQQQQQQHHHQHQQPPPSSNGHTSPIPSQVNGDGSAANCGESGKTNTNTGSHSHSNSGNTNTDADKEQEREKAKEKANEEESEDSDDDVVVVLEGCEGNASSSSSSSNSNSNASSNNHKAAATTTTTATTANHCNRSGGSSRSHRSARSSRQISQSTAVGKTTTCAAKKPTAAQATTTTAKNSNSNSNVNVNVNVNSNGSGNGNANSKVNRRSRQRSLSKDINNQPASSNSNSNSSNNSSNSNGGATATAAGFMSSAAAAAAGAAGGGALFQPQSVSTANSSSSNNNNSSTPAALATHSPTSNSPVSGASSASSLLTAAFGNLFGGSSAKMLNELFGRQMKQAQDATSGLPQSLDNAMLAAAMETATSAELLIGSLNSTSKLLQQQHNNNSIAPANSTPMSNGTNASISPGSAHSSSHSHQGVSPKGSRRVSACSDRSLEAAAADVAGGSPPRAASVSSLNGGASSGEQHQSQLQHDLVAHHMLRNILQGKKELMQLDQELRTAMQQQQQQLQEKEQLHSKLNNNNNNNIAATANNNNNTTMESINLIDDSEMADIKIKSEPQTAPQPQQSPHGSSHSSRSGSGSGSHSSMASDGSLRRKSSDSLDSHGAQDDAQDEEDAAPTGQRSESRAPEEPQLPTKKESVDDMLDEVELLGLHSRGSDMDSLASPSHSDMMLLDKDDVLDEDDDDDCVEQKTSGSGCLKKPGMDLKRARVENIVSGMRCSPSSGLAQAGQLQVNGCKKRKLYQPQQHAMERYVAAAAGLNFGLNLQSMMLDQEDSESNELESPQIQQKRVEKNALKSQLRSMQEQLAEMQQKYVQLCSRMEQESECQELDQDQDVEQEQEPDNGSSDHIELSPSPTLTGDGDVSPNHKEETGQERPGSSSPSPSPLKPKTSLGESSDSGANMLSQMMSKMMSGKLHNPLVGVGHPALPQGFPPLLQHMGDMSHAAAMYQQFFFEQEARMAKEAAEQQQQQQQQQQQQQQQQQQEQQRRFEQEQQEQQRRKEEQQQQIQRQQQHLQQLQQQQMEQQHVATAAPRPQMHHPAPARLPTRMGGAAGHTALKSELSEKFQMLRANNNSSMMRMSGTDLEGLADVLKSEITTSLSALVDTIVTRFVHQRRLFSKQADSVTAAAEQLNKDLLLASQILDRKSPRTKVADRPQNGPTPATQSAAAMFQAPKTPQGMNPVAAAALYNSMTGPFCLPPDQQQQQQTAQQQQSAQQQQQSSQQTQQQLEQNEALSLVVTPKKKRHKVTDTRITPRTVSRILAQDGVVPPTGGPPSTPQQQQQQQQQQQQQQQQQQQQASNGGNSNATPAQSPTRSSGGAAYHPQPPPPPPPMMPVSLPTSVAIPNPSLHESKVFSPYSPFFNPHAAAGQATAAQLHQHHQQHHPHHQSMQLSSSPPGSLGALMDSRDSPPLPHPPSMLHPALLAAAHHGGSPDYKTCLRAVMDAQDRQSECNSADMQFDGMAPTISFYKQMQLKTEHQESLMAKHCESLTPLHSSTLTPMHLRKAKLMFFWVRYPSSAVLKMYFPDIKFNKNNTAQLVKWFSNFREFYYIQMEKYARQAVTEGIKTPDDLLIAGDSELYRVLNLHYNRNNHIEVPQNFRFVVESTLREFFRAIQGGKDTEQSWKKSIYKIISRMDDPVPEYFKSPNFLEQLE.

Disordered regions lie at residues 23 to 292 (LKAN…SNGG), 322 to 357 (SVSTANSSSSNNNNSSTPAALATHSPTSNSPVSGAS), 437 to 521 (NSIA…QSQL), 608 to 692 (EPQT…ESVD), 732 to 751 (EDDDDDCVEQKTSGSGCLKK), 823 to 844 (QEDSESNELESPQIQQKRVEKN), 875 to 951 (SECQ…DSGA), 1040 to 1101 (FEQE…RMGG), 1197 to 1217 (SPRTKVADRPQNGPTPATQSA), 1245 to 1389 (PFCL…VSLP), and 1418 to 1469 (AGQA…PSML). Positions 36–53 (QQHQPQFQQQQQQQQQQQ) are enriched in low complexity. Over residues 66-79 (SNGHTSPIPSQVNG) the composition is skewed to polar residues. Low complexity predominate over residues 92–109 (TNTNTGSHSHSNSGNTNT). A compositionally biased stretch (basic and acidic residues) spans 110 to 126 (DADKEQEREKAKEKANE). Residues 127-136 (EESEDSDDDV) are compositionally biased toward acidic residues. 5 stretches are compositionally biased toward low complexity: residues 137 to 188 (VVVL…GGSS), 196 to 255 (SSRQ…ANSK), 274 to 292 (ASSNSNSNSSNNSSNSNGG), 327 to 337 (NSSSSNNNNSS), and 346 to 357 (SPTSNSPVSGAS). The span at 437–452 (NSIAPANSTPMSNGTN) shows a compositional bias: polar residues. The span at 453–472 (ASISPGSAHSSSHSHQGVSP) shows a compositional bias: low complexity. Phosphoserine is present on residues serine 479, serine 482, serine 485, and serine 497. Composition is skewed to polar residues over residues 503–521 (SVSSLNGGASSGEQHQSQL) and 608–617 (EPQTAPQPQQ). Residues 618 to 642 (SPHGSSHSSRSGSGSGSHSSMASDG) show a composition bias toward low complexity. 2 stretches are compositionally biased toward basic and acidic residues: residues 643 to 658 (SLRRKSSDSLDSHGAQ) and 674 to 691 (SESRAPEEPQLPTKKESV). Serine 651 and serine 654 each carry phosphoserine. A compositionally biased stretch (acidic residues) spans 875–892 (SECQELDQDQDVEQEQEP). Residues 927 to 944 (PGSSSPSPSPLKPKTSLG) show a composition bias toward low complexity. Basic and acidic residues predominate over residues 1040–1054 (FEQEQQEQQRRKEEQ). The segment covering 1055–1076 (QQQIQRQQQHLQQLQQQQMEQQ) has biased composition (low complexity). A compositionally biased stretch (polar residues) spans 1208 to 1217 (NGPTPATQSA). The segment covering 1252–1278 (QQQQQQTAQQQQSAQQQQQSSQQTQQQ) has biased composition (low complexity). The Nuclear localization signal signature appears at 1291-1298 (PKKKRHKV). Residues 1328-1348 (PQQQQQQQQQQQQQQQQQQQQ) are compositionally biased toward low complexity. A compositionally biased stretch (polar residues) spans 1349-1367 (ASNGGNSNATPAQSPTRSS). Pro residues predominate over residues 1374 to 1384 (PQPPPPPPPMM). Positions 1427 to 1437 (HQHHQQHHPHH) are enriched in basic residues. The segment covering 1438–1451 (QSMQLSSSPPGSLG) has biased composition (low complexity). The 59-residue stretch at 1545 to 1603 (SSTLTPMHLRKAKLMFFWVRYPSSAVLKMYFPDIKFNKNNTAQLVKWFSNFREFYYIQM) folds into the Prospero-type homeo domain. The tract at residues 1545–1703 (SSTLTPMHLR…KSPNFLEQLE (159 aa)) is homeo-Prospero. One can recognise a Prospero domain in the interval 1604–1703 (EKYARQAVTE…KSPNFLEQLE (100 aa)).

Belongs to the Prospero homeodomain family.

The protein localises to the nucleus. It is found in the cytoplasm. Its subcellular location is the cell cortex. Its function is as follows. Homeodomain protein that controls neuronal identity. As a transcriptional factor, regulates the expression of ftz, eve and en in a subset of neuroblast progeny and modulates the transcriptional activity of other homeodomain proteins such as Dfd. Required for proper neuronal differentiation, axonal outgrowth and pathfinding of most or all neurons and their precursors in central and peripheral nervous systems. Regulates asymmetric stem cell self-renewal together with brat. This is Homeobox protein prospero (pros) from Drosophila melanogaster (Fruit fly).